We begin with the raw amino-acid sequence, 55 residues long: Large ribosomal subunit protein bL32 (55 aa).

The disordered stretch occupies residues 1–28; sequence MAVQQNKPTRSKRGMRRSHDALTTATLS.

Belongs to the bacterial ribosomal protein bL32 family.

The chain is Large ribosomal subunit protein bL32 from Serratia proteamaculans (strain 568).